We begin with the raw amino-acid sequence, 141 residues long: MAKKVVALIKLALPAGKANPAPPVGPALGQHGVNIMAFCKEYNARTQDKVGLVIPVEISVFEDRSFTFILKTPPASVLIAKAAGIERGSGNPNKTKVGKITTAQLREIAETKLPDFNTKNVEAAMRIVEGTARNMGVTIAD.

It belongs to the universal ribosomal protein uL11 family. As to quaternary structure, part of the ribosomal stalk of the 50S ribosomal subunit. Interacts with L10 and the large rRNA to form the base of the stalk. L10 forms an elongated spine to which L12 dimers bind in a sequential fashion forming a multimeric L10(L12)X complex. Post-translationally, one or more lysine residues are methylated.

Its function is as follows. Forms part of the ribosomal stalk which helps the ribosome interact with GTP-bound translation factors. The polypeptide is Large ribosomal subunit protein uL11 (Synechococcus sp. (strain ATCC 27144 / PCC 6301 / SAUG 1402/1) (Anacystis nidulans)).